We begin with the raw amino-acid sequence, 202 residues long: MEAALLGLCNWSTLGVCAALKLPQISAVLAARSARGLSLPSLLLELAGFLVFLRYQCYYGYPPLTYLEYPILIAQDVILLLCIFHFNGNVKQATPYIAVLVSSWFILALQKWIIDLAMNLCTFISAASKFAQLQCLWKTRDSGTVSALTWSLSSYTCATRIITTLMTTNDFTILLRFVIMLALNIWVTVTVLRYRKTAIKAE.

The N-terminal stretch at 1-19 is a signal peptide; that stretch reads MEAALLGLCNWSTLGVCAA. The next 4 membrane-spanning stretches (helical) occupy residues 33 to 53, 64 to 84, 97 to 117, and 171 to 191; these read SARGLSLPSLLLELAGFLVFL, LTYLEYPILIAQDVILLLCIF, IAVLVSSWFILALQKWIIDLA, and FTILLRFVIMLALNIWVTVTV.

The protein resides in the membrane. In Homo sapiens (Human), this protein is Solute carrier family 66 member 3.